The following is an 810-amino-acid chain: Plasminogen (810 aa).

The signal sequence occupies residues 1–19; sequence MEHKEVVLLLLLFLKSGQG. Residues 20 to 98 enclose the PAN domain; it reads EPLDDYVNTK…RDVVLFEKKV (79 aa). Intrachain disulfides connect Cys49–Cys73, Cys53–Cys61, Cys103–Cys181, Cys124–Cys164, Cys152–Cys176, Cys185–Cys262, Cys188–Cys316, Cys206–Cys245, Cys234–Cys257, Cys275–Cys352, Cys296–Cys335, and Cys324–Cys347. Kringle domains lie at 103–181, 184–262, and 275–352; these read CKTG…IPEC, ECMH…IPRC, and CLKG…IPSC. The segment covering 125-141 has biased composition (polar residues); the sequence is QKWSSTSPHRPTFSPAT. Residues 125–145 form a disordered region; the sequence is QKWSSTSPHRPTFSPATHPSE. L-lysine contacts are provided by Thr136, Asp158, and Arg172. Thr365 carries O-linked (GalNAc...) threonine glycosylation. Disulfide bonds link Cys377-Cys454, Cys398-Cys437, Cys426-Cys449, Cys481-Cys560, Cys502-Cys543, Cys531-Cys555, Cys567-Cys685, Cys577-Cys585, and Cys607-Cys623. Kringle domains follow at residues 377-454 and 481-560; these read CYHG…LKKC and CMFG…VPQC. Residues Asp432 and Arg445 each contribute to the L-lysine site. Residues 581–808 form the Peptidase S1 domain; the sequence is VVGGCVAYPH…FVTWIEGVMR (228 aa). Ser597 is modified (phosphoserine). Residues His622 and Asp665 each act as charge relay system in the active site. Ser688 is modified (phosphoserine). 3 cysteine pairs are disulfide-bonded: Cys699–Cys766, Cys729–Cys745, and Cys756–Cys784. The active-site Charge relay system is Ser760.

Belongs to the peptidase S1 family. Plasminogen subfamily. In terms of assembly, interacts with CSPG4 and AMOT. Interacts (via the Kringle domains) with HRG; the interaction tethers PLG to the cell surface and enhances its activation. Interacts (via Kringle 4 domain) with ADA; the interaction stimulates PLG activation when in complex with DPP4. Angiostatin: Interacts with ATP5F1A; the interaction inhibits most of the angiogenic effects of angiostatin. Post-translationally, in the presence of the inhibitor, the activation involves only cleavage after Arg-580, yielding two chains held together by two disulfide bonds. In the absence of the inhibitor, the activation involves additionally the removal of the activation peptide.

It localises to the secreted. It carries out the reaction Preferential cleavage: Lys-|-Xaa &gt; Arg-|-Xaa, higher selectivity than trypsin. Converts fibrin into soluble products.. With respect to regulation, converted into plasmin by plasminogen activators, both plasminogen and its activator being bound to fibrin. Activated with catalytic amounts of streptokinase. Plasmin dissolves the fibrin of blood clots and acts as a proteolytic factor in a variety of other processes including embryonic development, tissue remodeling, tumor invasion, and inflammation. In ovulation, weakens the walls of the Graafian follicle. It activates the urokinase-type plasminogen activator, collagenases and several complement zymogens, such as C1, C4 and C5. Cleavage of fibronectin and laminin leads to cell detachment and apoptosis. Also cleaves fibrin, thrombospondin and von Willebrand factor. Its role in tissue remodeling and tumor invasion may be modulated by CSPG4. Binds to cells. This is Plasminogen (PLG) from Macaca mulatta (Rhesus macaque).